Reading from the N-terminus, the 448-residue chain is Methylenetetrahydrofolate--tRNA-(uracil-5-)-methyltransferase TrmFO (448 aa).

FAD is bound at residue 13 to 18 (GAGLAG).

The protein belongs to the MnmG family. TrmFO subfamily. The cofactor is FAD.

It localises to the cytoplasm. It carries out the reaction uridine(54) in tRNA + (6R)-5,10-methylene-5,6,7,8-tetrahydrofolate + NADH + H(+) = 5-methyluridine(54) in tRNA + (6S)-5,6,7,8-tetrahydrofolate + NAD(+). It catalyses the reaction uridine(54) in tRNA + (6R)-5,10-methylene-5,6,7,8-tetrahydrofolate + NADPH + H(+) = 5-methyluridine(54) in tRNA + (6S)-5,6,7,8-tetrahydrofolate + NADP(+). Its function is as follows. Catalyzes the folate-dependent formation of 5-methyl-uridine at position 54 (M-5-U54) in all tRNAs. The protein is Methylenetetrahydrofolate--tRNA-(uracil-5-)-methyltransferase TrmFO of Streptococcus pyogenes serotype M5 (strain Manfredo).